The primary structure comprises 311 residues: MSTPLIPPAPPKKTLQLYTPQYYGLCTLGGLLACGTTHSAITPLDLIKCRKQVNPNIYPGNIAGFKTILSKEGLRGLYTGGMPTLIGYSLQGCGKYGFYELFKHKYSTLVGAQKAHEYRTSIYLAASASAELLADIMLCPMEAIKVRVQTSNPRFANTTREAWSKIVTNEGFGTLYRGLAPLWFRQIPYTMMKFASFERIVEALYTYIGKPKNMYSKAEKIGISFAGGYMAGVLCAIISHPADVMVSKLNSNKKAGEGAGAAAARIYKEIGFSGLWNGLGVRIVMIGTLTGAQWLIYDSFKIMCGFPATGA.

Over 1–23 (MSTPLIPPAPPKKTLQLYTPQYY) the chain is Mitochondrial intermembrane. 3 Solcar repeats span residues 21–105 (QYYG…FKHK), 118–203 (YRTS…IVEA), and 219–303 (EKIG…FKIM). The helical transmembrane segment at 24–44 (GLCTLGGLLACGTTHSAITPL) threads the bilayer. Over 45-67 (DLIKCRKQVNPNIYPGNIAGFKT) the chain is Mitochondrial matrix. Residues 68 to 88 (ILSKEGLRGLYTGGMPTLIGY) form a helical membrane-spanning segment. Residues 89-120 (SLQGCGKYGFYELFKHKYSTLVGAQKAHEYRT) are Mitochondrial intermembrane-facing. Residues 121 to 141 (SIYLAASASAELLADIMLCPM) form a helical membrane-spanning segment. Residues 142–171 (EAIKVRVQTSNPRFANTTREAWSKIVTNEG) lie on the Mitochondrial matrix side of the membrane. A helical transmembrane segment spans residues 172–192 (FGTLYRGLAPLWFRQIPYTMM). Topologically, residues 193-220 (KFASFERIVEALYTYIGKPKNMYSKAEK) are mitochondrial intermembrane. The chain crosses the membrane as a helical span at residues 221 to 241 (IGISFAGGYMAGVLCAIISHP). Residues 242–269 (ADVMVSKLNSNKKAGEGAGAAAARIYKE) lie on the Mitochondrial matrix side of the membrane. The helical transmembrane segment at 270–290 (IGFSGLWNGLGVRIVMIGTLT) threads the bilayer. Over 291–311 (GAQWLIYDSFKIMCGFPATGA) the chain is Mitochondrial intermembrane.

The protein belongs to the mitochondrial carrier (TC 2.A.29) family.

It is found in the mitochondrion inner membrane. Transport of phosphate groups from the cytosol to the mitochondrial matrix. This Schizosaccharomyces pombe (strain 972 / ATCC 24843) (Fission yeast) protein is Probable mitochondrial phosphate carrier protein.